Here is a 370-residue protein sequence, read N- to C-terminus: UDP-N-acetylglucosamine--N-acetylmuramyl-(pentapeptide) pyrophosphoryl-undecaprenol N-acetylglucosamine transferase (370 aa).

UDP-N-acetyl-alpha-D-glucosamine-binding positions include 10–12 (TGG), N126, S200, I255, and Q300.

The protein belongs to the glycosyltransferase 28 family. MurG subfamily.

The protein resides in the cell membrane. It catalyses the reaction Mur2Ac(oyl-L-Ala-gamma-D-Glu-L-Lys-D-Ala-D-Ala)-di-trans,octa-cis-undecaprenyl diphosphate + UDP-N-acetyl-alpha-D-glucosamine = beta-D-GlcNAc-(1-&gt;4)-Mur2Ac(oyl-L-Ala-gamma-D-Glu-L-Lys-D-Ala-D-Ala)-di-trans,octa-cis-undecaprenyl diphosphate + UDP + H(+). It participates in cell wall biogenesis; peptidoglycan biosynthesis. In terms of biological role, cell wall formation. Catalyzes the transfer of a GlcNAc subunit on undecaprenyl-pyrophosphoryl-MurNAc-pentapeptide (lipid intermediate I) to form undecaprenyl-pyrophosphoryl-MurNAc-(pentapeptide)GlcNAc (lipid intermediate II). The chain is UDP-N-acetylglucosamine--N-acetylmuramyl-(pentapeptide) pyrophosphoryl-undecaprenol N-acetylglucosamine transferase from Lactobacillus delbrueckii subsp. bulgaricus (strain ATCC 11842 / DSM 20081 / BCRC 10696 / JCM 1002 / NBRC 13953 / NCIMB 11778 / NCTC 12712 / WDCM 00102 / Lb 14).